A 637-amino-acid chain; its full sequence is Chaperone protein HtpG (637 aa).

Residues 1–345 (MSQQETHGFQ…SNDLPLNVSR (345 aa)) form an a; substrate-binding region. A b region spans residues 346-562 (EILQDNHITK…EGEMSTQMIK (217 aa)). The tract at residues 563–637 (LMQAAGQPVP…MNQMLLANMK (75 aa)) is c.

The protein belongs to the heat shock protein 90 family. Homodimer.

Its subcellular location is the cytoplasm. Functionally, molecular chaperone. Has ATPase activity. In Shewanella sp. (strain W3-18-1), this protein is Chaperone protein HtpG.